Here is a 182-residue protein sequence, read N- to C-terminus: Adenine phosphoribosyltransferase (182 aa).

This sequence belongs to the purine/pyrimidine phosphoribosyltransferase family. Homodimer.

The protein resides in the cytoplasm. The enzyme catalyses AMP + diphosphate = 5-phospho-alpha-D-ribose 1-diphosphate + adenine. The protein operates within purine metabolism; AMP biosynthesis via salvage pathway; AMP from adenine: step 1/1. Its function is as follows. Catalyzes a salvage reaction resulting in the formation of AMP, that is energically less costly than de novo synthesis. This chain is Adenine phosphoribosyltransferase, found in Campylobacter curvus (strain 525.92).